Consider the following 300-residue polypeptide: Secreted mono- and diacylglycerol lipase LIP4 (300 aa).

An N-terminal signal peptide occupies residues 1–16; sequence MRFLAFLLCLVPLALC. Residues Cys54 and Cys293 are joined by a disulfide bond. Ser167 (nucleophile) is an active-site residue. Asp224 is an active-site residue.

Belongs to the AB hydrolase superfamily. Lipase family. Class 3 subfamily.

It localises to the secreted. It catalyses the reaction a monoacylglycerol + H2O = glycerol + a fatty acid + H(+). The catalysed reaction is a diacylglycerol + H2O = a monoacylglycerol + a fatty acid + H(+). Secreted lipase involved in Dandruff and seborrheic dermatitis (D/SD) probably via lipase-mediated breakdown of sebaceous lipids and release of irritating free fatty acids. Shows activity against monoglyceride and diglyceride substrates. Due to an absence of fatty acid synthase genes in Malassezia species, secretory lipases are essential for the yeast to generate free fatty acids from degradation of sebum and assimilate them as lipid sources for growth. Plays an essential role at the pathogen-host interface during disease progression. This chain is Secreted mono- and diacylglycerol lipase LIP4, found in Malassezia restricta (Seborrheic dermatitis infection agent).